A 156-amino-acid polypeptide reads, in one-letter code: Small ribosomal subunit protein uS7 (156 aa).

Belongs to the universal ribosomal protein uS7 family. Part of the 30S ribosomal subunit. Contacts proteins S9 and S11.

Functionally, one of the primary rRNA binding proteins, it binds directly to 16S rRNA where it nucleates assembly of the head domain of the 30S subunit. Is located at the subunit interface close to the decoding center, probably blocks exit of the E-site tRNA. This chain is Small ribosomal subunit protein uS7, found in Leptothrix cholodnii (strain ATCC 51168 / LMG 8142 / SP-6) (Leptothrix discophora (strain SP-6)).